A 337-amino-acid polypeptide reads, in one-letter code: DNA-directed RNA polymerase subunit alpha (337 aa).

The segment at 1-233 (MVREKVTVST…DLFIPFLHME (233 aa)) is alpha N-terminal domain (alpha-NTD). The interval 264–337 (NKKIALKSIF…FVIDLAKNKF (74 aa)) is alpha C-terminal domain (alpha-CTD).

It belongs to the RNA polymerase alpha chain family. As to quaternary structure, in plastids the minimal PEP RNA polymerase catalytic core is composed of four subunits: alpha, beta, beta', and beta''. When a (nuclear-encoded) sigma factor is associated with the core the holoenzyme is formed, which can initiate transcription.

The protein resides in the plastid. The protein localises to the chloroplast. It catalyses the reaction RNA(n) + a ribonucleoside 5'-triphosphate = RNA(n+1) + diphosphate. In terms of biological role, DNA-dependent RNA polymerase catalyzes the transcription of DNA into RNA using the four ribonucleoside triphosphates as substrates. The polypeptide is DNA-directed RNA polymerase subunit alpha (Atropa belladonna (Belladonna)).